A 314-amino-acid chain; its full sequence is Adenosine receptor A3 (314 aa).

At methionine 1 to threonine 14 the chain is on the extracellular side. Residues asparagine 4 and asparagine 12 are each glycosylated (N-linked (GlcNAc...) asparagine). The helical transmembrane segment at tyrosine 15–valine 37 threads the bilayer. Residues lysine 38–phenylalanine 48 lie on the Cytoplasmic side of the membrane. Residues tyrosine 49–isoleucine 72 form a helical membrane-spanning segment. Residues serine 73 to leucine 84 are Extracellular-facing. A disulfide bridge connects residues cysteine 83 and cysteine 166. The chain crosses the membrane as a helical span at residues phenylalanine 85 to valine 106. Topologically, residues aspartate 107–arginine 126 are cytoplasmic. The helical transmembrane segment at isoleucine 127 to glycine 148 threads the bilayer. Over tryptophan 149–methionine 177 the chain is Extracellular. Residue asparagine 160 is glycosylated (N-linked (GlcNAc...) asparagine). Residues valine 178–leucine 198 traverse the membrane as a helical segment. The Cytoplasmic segment spans residues aspartate 199 to serine 231. Residues leucine 232–phenylalanine 255 traverse the membrane as a helical segment. The Extracellular segment spans residues histidine 256 to glutamine 261. A helical membrane pass occupies residues isoleucine 262–tyrosine 284. Residues lysine 285 to glutamate 314 are Cytoplasmic-facing. A lipid anchor (S-palmitoyl cysteine) is attached at cysteine 303.

Belongs to the G-protein coupled receptor 1 family.

The protein resides in the cell membrane. Functionally, receptor for adenosine. The activity of this receptor is mediated by G proteins which inhibits adenylyl cyclase. The polypeptide is Adenosine receptor A3 (ADORA3) (Canis lupus familiaris (Dog)).